The sequence spans 346 residues: Annexin A1 (346 aa).

Alanine 2 bears the N-acetylalanine mark. The residue at position 5 (serine 5) is a Phosphoserine; by TRPM7. Residue glutamine 19 forms an Isoglutamyl lysine isopeptide (Gln-Lys) (interchain with K-?) linkage. Position 21 is a phosphotyrosine; by EGFR (tyrosine 21). Serine 27 is modified (phosphoserine; by PKC). Phosphoserine is present on residues serine 34 and serine 37. The residue at position 41 (threonine 41) is a Phosphothreonine. Annexin repeat units follow at residues 42–113 (FNPS…ALLK), 114–185 (TPAQ…SLAK), 197–269 (DLAD…AIVK), and 273–344 (SKPA…ALCG). An N6-acetyllysine modification is found at lysine 58. Glycine 59, valine 60, glutamate 62, lysine 97, leucine 100, glutamate 105, methionine 127, glycine 129, glycine 131, threonine 132, and glutamate 134 together coordinate Ca(2+). Threonine 136 is subject to Phosphothreonine. Ca(2+) contacts are provided by aspartate 171, glycine 210, and arginine 213. A Glycyl lysine isopeptide (Lys-Gly) (interchain with G-Cter in SUMO1); alternate cross-link involves residue lysine 214. Lysine 214 is covalently cross-linked (Glycyl lysine isopeptide (Lys-Gly) (interchain with G-Cter in SUMO2); alternate). Glycine 215 is a Ca(2+) binding site. Lysine 239 carries the N6-acetyllysine modification. Residues aspartate 253, glutamate 255, and leucine 256 each contribute to the Ca(2+) site. A Glycyl lysine isopeptide (Lys-Gly) (interchain with G-Cter in SUMO1) cross-link involves residue lysine 257. Ca(2+) is bound by residues glutamate 261, methionine 286, glycine 288, and glycine 290. At lysine 312 the chain carries N6-acetyllysine. An intrachain disulfide couples cysteine 324 to cysteine 343. Residues leucine 328, glutamate 330, and threonine 331 each coordinate Ca(2+). A Glycyl lysine isopeptide (Lys-Gly) (interchain with G-Cter in SUMO1) cross-link involves residue lysine 332. Glutamate 336 contributes to the Ca(2+) binding site.

This sequence belongs to the annexin family. As to quaternary structure, homodimer; non-covalently linked. Homodimer; linked by transglutamylation. Homodimers linked by transglutamylation are observed in placenta, but not in other tissues. Interacts with S100A11. Heterotetramer, formed by two molecules each of S100A11 and ANXA1. Interacts with DYSF. Interacts with EGFR. Phosphorylated by protein kinase C, EGFR and TRPM7. Phosphorylated in response to EGF treatment. In terms of processing, sumoylated. Post-translationally, proteolytically cleaved by cathepsin CTSG to release the active N-terminal peptide Ac2-26. In terms of tissue distribution, detected in resting neutrophils. Detected in peripheral blood T-cells. Detected in extracellular vesicles in blood serum from patients with inflammatory bowel disease, but not in serum from healthy donors. Detected in placenta (at protein level). Detected in liver.

It localises to the nucleus. The protein localises to the cytoplasm. It is found in the cell projection. The protein resides in the cilium. Its subcellular location is the cell membrane. It localises to the membrane. The protein localises to the endosome membrane. It is found in the basolateral cell membrane. The protein resides in the apical cell membrane. Its subcellular location is the lateral cell membrane. It localises to the secreted. The protein localises to the extracellular space. It is found in the extracellular exosome. The protein resides in the cytoplasmic vesicle. Its subcellular location is the secretory vesicle lumen. It localises to the phagocytic cup. The protein localises to the early endosome. It is found in the cytoplasmic vesicle membrane. In terms of biological role, plays important roles in the innate immune response as effector of glucocorticoid-mediated responses and regulator of the inflammatory process. Has anti-inflammatory activity. Plays a role in glucocorticoid-mediated down-regulation of the early phase of the inflammatory response. Contributes to the adaptive immune response by enhancing signaling cascades that are triggered by T-cell activation, regulates differentiation and proliferation of activated T-cells. Promotes the differentiation of T-cells into Th1 cells and negatively regulates differentiation into Th2 cells. Has no effect on unstimulated T cells. Negatively regulates hormone exocytosis via activation of the formyl peptide receptors and reorganization of the actin cytoskeleton. Has high affinity for Ca(2+) and can bind up to eight Ca(2+) ions. Displays Ca(2+)-dependent binding to phospholipid membranes. Plays a role in the formation of phagocytic cups and phagosomes. Plays a role in phagocytosis by mediating the Ca(2+)-dependent interaction between phagosomes and the actin cytoskeleton. Functions at least in part by activating the formyl peptide receptors and downstream signaling cascades. Promotes chemotaxis of granulocytes and monocytes via activation of the formyl peptide receptors. Promotes rearrangement of the actin cytoskeleton, cell polarization and cell migration. Promotes resolution of inflammation and wound healing. Acts via neutrophil N-formyl peptide receptors to enhance the release of CXCL2. The chain is Annexin A1 (ANXA1) from Homo sapiens (Human).